The chain runs to 474 residues: Viral protein TPX (474 aa).

Positions 268 to 474 are disordered; that stretch reads VTVTPISSPS…TPTSTTSSNI (207 aa). Over residues 275 to 365 the composition is skewed to pro residues; sequence SPSPTPTPTP…PTPTPTPTPT (91 aa). One copy of the Thr-Pro(N) repeat lies at 278 to 367; that stretch reads PTPTPTPTPT…PTPTPTPTPT (90 aa). The interval 278-467 is 3 Thr-Pro repeats regions and two near identical repeats; sequence PTPTPTPTPT…PTPTPTPTPT (190 aa). Residues 368 to 377 constitute a repeat; that stretch reads YDITYVVFDV. A Thr-Pro(N) repeat occupies 378 to 436; sequence TPSPTPTPTPTPTPTPTPTPTPTPTPTPTPTPTPTPTPTPTPTPTPTPTPTPTPTPTPT. Over residues 380–434 the composition is skewed to pro residues; sequence SPTPTPTPTPTPTPTPTPTPTPTPTPTPTPTPTPTPTPTPTPTPTPTPTPTPTPT. The stretch at residues 437–446 is a repeat; that stretch reads YDITYVIFDV. Residues 447 to 467 form a Thr-Pro(N) repeat; it reads TPSPTPTPTPTPTPTPTPTPT. Over residues 449 to 465 the composition is skewed to pro residues; that stretch reads SPTPTPTPTPTPTPTPT.

This is Viral protein TPX from Thermoproteus tenax virus 1 (strain VT3) (TTV1).